Reading from the N-terminus, the 301-residue chain is Averufin oxidase A (301 aa).

An N-terminal signal peptide occupies residues 1 to 23; that stretch reads MPTYALLGATGATGSAILRCLLA. 3 N-linked (GlcNAc...) asparagine glycosylation sites follow: Asn-62, Asn-86, and Asn-190.

This sequence belongs to the avfA family.

Its pathway is mycotoxin biosynthesis. Functionally, averufin oxidase A; part of the fragmented gene cluster that mediates the biosynthesis of dothistromin (DOTH), a polyketide toxin very similar in structure to the aflatoxin precursor, versicolorin B. The first step of the pathway is the conversion of acetate to norsolorinic acid (NOR) and requires the fatty acid synthase subunits hexA and hexB, as well as the polyketide synthase pksA. PksA combines a hexanoyl starter unit and 7 malonyl-CoA extender units to synthesize the precursor NOR. The hexanoyl starter unit is provided to the acyl-carrier protein (ACP) domain by the fungal fatty acid synthase hexA/hexB. The second step is the conversion of NOR to averantin (AVN) and requires the norsolorinic acid ketoreductase nor1, which catalyzes the dehydration of norsolorinic acid to form (1'S)-averantin. The cytochrome P450 monooxygenase avnA then catalyzes the hydroxylation of AVN to 5'hydroxyaverantin (HAVN). The next step is performed by adhA that transforms HAVN to averufin (AVF). Averufin might then be converted to hydroxyversicolorone by cypX and avfA. Hydroxyversicolorone is further converted versiconal hemiacetal acetate (VHA) by moxY. VHA is then the substrate for the versiconal hemiacetal acetate esterase est1 to yield versiconal (VAL). Versicolorin B synthase vbsA then converts VAL to versicolorin B (VERB) by closing the bisfuran ring. Then, the activity of the versicolorin B desaturase verB leads to versicolorin A (VERA). DotB, a predicted chloroperoxidase, may perform epoxidation of the A-ring of VERA. Alternatively, a cytochrome P450, such as cypX or avnA could catalyze this step. It is also possible that another, uncharacterized, cytochrome P450 enzyme is responsible for this step. Opening of the epoxide could potentially be achieved by the epoxide hydrolase epoA. However, epoA seems not to be required for DOTH biosynthesis, but other epoxide hydrolases may have the ability to complement this hydrolysis. Alternatively, opening of the epoxide ring could be achieved non-enzymatically. The next step is the deoxygenation of ring A to yield the 5,8-dihydroxyanthraquinone which is most likely catalyzed by the NADPH dehydrogenase encoded by ver1. The last stages of DOTH biosynthesis are proposed to involve hydroxylation of the bisfuran. OrdB and norB might have oxidative roles here. An alternative possibility is that cytochrome P450 monoogenases such as avnA and cypX might perform these steps in addition to previously proposed steps. The protein is Averufin oxidase A of Dothistroma septosporum (Red band needle blight fungus).